Reading from the N-terminus, the 349-residue chain is Phenylalanine--tRNA ligase alpha subunit (349 aa).

Mg(2+) is bound at residue E258.

Belongs to the class-II aminoacyl-tRNA synthetase family. Phe-tRNA synthetase alpha subunit type 1 subfamily. In terms of assembly, tetramer of two alpha and two beta subunits. Mg(2+) serves as cofactor.

It is found in the cytoplasm. The enzyme catalyses tRNA(Phe) + L-phenylalanine + ATP = L-phenylalanyl-tRNA(Phe) + AMP + diphosphate + H(+). This chain is Phenylalanine--tRNA ligase alpha subunit, found in Rickettsia africae (strain ESF-5).